A 253-amino-acid chain; its full sequence is Triosephosphate isomerase (253 aa).

8–10 (NWK) provides a ligand contact to substrate. H93 serves as the catalytic Electrophile. Catalysis depends on E165, which acts as the Proton acceptor. Substrate-binding positions include G171, S210, and 231-232 (GG).

This sequence belongs to the triosephosphate isomerase family. Homodimer.

It is found in the cytoplasm. It carries out the reaction D-glyceraldehyde 3-phosphate = dihydroxyacetone phosphate. The protein operates within carbohydrate biosynthesis; gluconeogenesis. Its pathway is carbohydrate degradation; glycolysis; D-glyceraldehyde 3-phosphate from glycerone phosphate: step 1/1. Functionally, involved in the gluconeogenesis. Catalyzes stereospecifically the conversion of dihydroxyacetone phosphate (DHAP) to D-glyceraldehyde-3-phosphate (G3P). The polypeptide is Triosephosphate isomerase (Francisella tularensis subsp. tularensis (strain FSC 198)).